The primary structure comprises 103 residues: Floral defensin-like protein 1 (103 aa).

The first 25 residues, 1 to 25 (MARSICFFAVAILALMLFAAYDAEA), serve as a signal peptide directing secretion. 5 disulfide bridges follow: cysteine 28–cysteine 72, cysteine 32–cysteine 48, cysteine 39–cysteine 59, cysteine 45–cysteine 66, and cysteine 49–cysteine 68. Positions 73 to 103 (VFEKTEATQTETFTKDVNTLAEALLEADMMV) are cleaved as a propeptide — removed in mature form.

Belongs to the DEFL family. Post-translationally, when compared to other plant defensins, the petunia defensins have an additional fifth disulfide bond. Petals.

It localises to the secreted. It is found in the vacuole. In terms of biological role, plant defense peptide with antifungal activity against F.oxysporum and B.cinerea. The sequence is that of Floral defensin-like protein 1 (D1) from Petunia hybrida (Petunia).